The following is a 1121-amino-acid chain: CRISPR-associated endonuclease Cas9 1 (1121 aa).

Catalysis depends on Asp9, which acts as the For RuvC-like nuclease domain. 3 residues coordinate Mg(2+): Asp9, Glu509, and Glu513. One can recognise an HNH Cas9-type domain in the interval Glu516 to Leu684. His599 functions as the Proton acceptor for HNH nuclease domain in the catalytic mechanism. His738 provides a ligand contact to Mg(2+).

This sequence belongs to the CRISPR-associated protein Cas9 family. Subtype II-A subfamily. Monomer. Binds crRNA and tracrRNA. Mg(2+) serves as cofactor.

Its function is as follows. CRISPR (clustered regularly interspaced short palindromic repeat) is an adaptive immune system that provides protection against mobile genetic elements (viruses, transposable elements and conjugative plasmids). CRISPR clusters contain spacers, sequences complementary to antecedent mobile elements, and target invading nucleic acids. CRISPR clusters are transcribed and processed into CRISPR RNA (crRNA). In type II CRISPR systems correct processing of pre-crRNA requires a trans-encoded small RNA (tracrRNA), endogenous ribonuclease 3 (rnc) and this protein. The tracrRNA serves as a guide for ribonuclease 3-aided processing of pre-crRNA. Subsequently Cas9/crRNA/tracrRNA endonucleolytically cleaves linear or circular dsDNA target complementary to the spacer; Cas9 is inactive in the absence of the 2 guide RNAs (gRNA). Cas9 recognizes the protospacer adjacent motif (PAM) in the CRISPR repeat sequences to help distinguish self versus nonself, as targets within the bacterial CRISPR locus do not have PAMs. PAM recognition is also required for catalytic activity. Cuts target DNA when Cas9 and gRNAs are mixed. The protein is CRISPR-associated endonuclease Cas9 1 of Streptococcus thermophilus (strain ATCC BAA-491 / LMD-9).